Consider the following 99-residue polypeptide: Acylphosphatase-2 (99 aa).

Position 2 is an N-acetylserine (Ser-2). The Acylphosphatase-like domain maps to 9 to 99 (SVDYEVFGRV…LEYSNFSIRY (91 aa)). Residues Arg-24 and Asn-42 contribute to the active site. The residue at position 93 (Ser-93) is a Phosphoserine.

This sequence belongs to the acylphosphatase family.

It catalyses the reaction an acyl phosphate + H2O = a carboxylate + phosphate + H(+). Functionally, its physiological role is not yet clear. The sequence is that of Acylphosphatase-2 (ACYP2) from Homo sapiens (Human).